The following is a 253-amino-acid chain: Ubiquinone/menaquinone biosynthesis C-methyltransferase UbiE (253 aa).

S-adenosyl-L-methionine is bound by residues T76, D97, and 125 to 126 (NA).

This sequence belongs to the class I-like SAM-binding methyltransferase superfamily. MenG/UbiE family.

It catalyses the reaction a 2-demethylmenaquinol + S-adenosyl-L-methionine = a menaquinol + S-adenosyl-L-homocysteine + H(+). The catalysed reaction is a 2-methoxy-6-(all-trans-polyprenyl)benzene-1,4-diol + S-adenosyl-L-methionine = a 5-methoxy-2-methyl-3-(all-trans-polyprenyl)benzene-1,4-diol + S-adenosyl-L-homocysteine + H(+). Its pathway is quinol/quinone metabolism; menaquinone biosynthesis; menaquinol from 1,4-dihydroxy-2-naphthoate: step 2/2. It functions in the pathway cofactor biosynthesis; ubiquinone biosynthesis. Methyltransferase required for the conversion of demethylmenaquinol (DMKH2) to menaquinol (MKH2) and the conversion of 2-polyprenyl-6-methoxy-1,4-benzoquinol (DDMQH2) to 2-polyprenyl-3-methyl-6-methoxy-1,4-benzoquinol (DMQH2). In Bradyrhizobium sp. (strain BTAi1 / ATCC BAA-1182), this protein is Ubiquinone/menaquinone biosynthesis C-methyltransferase UbiE.